Here is a 517-residue protein sequence, read N- to C-terminus: GMP synthase [glutamine-hydrolyzing] (517 aa).

One can recognise a Glutamine amidotransferase type-1 domain in the interval 9–199 (RILILDFGSQ…VLNVCGCEGL (191 aa)). The active-site Nucleophile is the C86. Catalysis depends on residues H173 and E175. A GMPS ATP-PPase domain is found at 200–392 (WTSASIIEDA…LGLPYNMLYR (193 aa)). 227–233 (SGGVDSS) serves as a coordination point for ATP.

As to quaternary structure, homodimer.

It carries out the reaction XMP + L-glutamine + ATP + H2O = GMP + L-glutamate + AMP + diphosphate + 2 H(+). Its pathway is purine metabolism; GMP biosynthesis; GMP from XMP (L-Gln route): step 1/1. Its function is as follows. Catalyzes the synthesis of GMP from XMP. In Aliivibrio fischeri (strain MJ11) (Vibrio fischeri), this protein is GMP synthase [glutamine-hydrolyzing].